A 253-amino-acid chain; its full sequence is uncharacterized protein (253 aa).

Residue 6–30 (IITASDSGIGKECALLLAQQGFDIG) participates in NADP(+) binding. Ser-140 is a substrate binding site. Tyr-153 serves as the catalytic Proton acceptor.

It belongs to the short-chain dehydrogenases/reductases (SDR) family.

This is an uncharacterized protein from Escherichia coli (strain K12).